Reading from the N-terminus, the 331-residue chain is UPF0324 membrane protein SERP0111 (331 aa).

10 consecutive transmembrane segments (helical) span residues 7–26, 31–48, 69–88, 93–115, 122–144, 154–176, 183–205, 249–271, 275–297, and 308–330; these read ASFMKGIMFTFTIAIISYIL, ILHTIGALAIAIIFAMIY, LLKFAIILYGLKLNMGDILG, LLLIDIIVIIFSISLTLLLNQII, SILLGIGTGVCGAAAIAATAPIL, SVGIIALVGTIFALIYTAIEAIF, YGAWTGISLHEIAQVVLAAGIGG, IPYFLIGFIIMACINTFVPIPSL, IINVITTLCMLMAMVALGLNIVL, and FIVICITSICLSGVTLLVTSIMF.

The protein belongs to the UPF0324 family.

Its subcellular location is the cell membrane. The chain is UPF0324 membrane protein SERP0111 from Staphylococcus epidermidis (strain ATCC 35984 / DSM 28319 / BCRC 17069 / CCUG 31568 / BM 3577 / RP62A).